The sequence spans 125 residues: Cardioactive peptide (125 aa).

The N-terminal stretch at 1–22 is a signal peptide; that stretch reads MTVSRVCLLLLVALVYLDCCYA. The propeptide occupies 23–42; it reads ASIPRNFDPRLSEEIVMAPK. Residues Cys47 and Cys53 are joined by a disulfide bond. Cys53 carries the post-translational modification Cysteine amide. A propeptide spanning residues 57–125 is cleaved from the precursor; that stretch reads RSQGPPGMPA…RRKQKEAYIQ (69 aa).

As to expression, abdominal perivisceral organ; major neurohemal release site. Expressed in 116 neurons in post-embryonic central nervous system. Nine pairs of cells are observed in the brain, 4.5 pairs in the subesophageal ganglion, three pairs in each thoracic ganglion (T1-T3), three pairs in the first abdominal ganglion (A1), five pairs each in the second to sixth abdominal ganglia (A2-A6) and 7.5 pairs in the terminal ganglion. Expressed in every ganglion in each post-embryonic stage, except in the thoracic ganglia of first- and second-instar larvae. Colocalizes with CAP2b in median neurosecretory cells during the last larval instar through to adults.

It is found in the secreted. Functionally, cardioregulatory neurohormone that increases heart beat rate during adult wing inflation; has no effect on beat amplitude. The effect of CCAP is both ino- and chronotropic. The polypeptide is Cardioactive peptide (Manduca sexta (Tobacco hawkmoth)).